A 164-amino-acid polypeptide reads, in one-letter code: Sorting nexin-3 (164 aa).

Residues 40–163 enclose the PX domain; the sequence is EIEVCNPKTH…VRFIQDPTFQ (124 aa). A 1,2-diacyl-sn-glycero-3-phospho-(1D-myo-inositol-3-phosphate) contacts are provided by arginine 83, serine 85, lysine 114, arginine 120, and arginine 129.

Belongs to the sorting nexin family.

The protein resides in the cytoplasm. It is found in the golgi apparatus membrane. The protein localises to the prevacuolar compartment membrane. Its function is as follows. Required for retention of late Golgi membrane proteins. Component of the retrieval machinery that functions by direct interaction with the cytosolic tails of certain TGN membrane proteins during the sorting/budding process at the prevacuolar compartment. Binds phosphatidylinositol 3-phosphate (PtdIns(P3)). The polypeptide is Sorting nexin-3 (SNX3) (Kluyveromyces lactis (strain ATCC 8585 / CBS 2359 / DSM 70799 / NBRC 1267 / NRRL Y-1140 / WM37) (Yeast)).